The chain runs to 225 residues: MAAEFNNDWDDLLKDEFEKEYYLNLRKFLINEYKTQKIHPSMYDIFNALKFTPYKDVKVVILGQDPYHGPNQAHGFSFSVKPGVQTPPSLRNMFKELNSDLGCYIPNNGFLESWAKQGILLLNTVLTVREGQANSHKGKGWEIFTDRVIELLNKREEPIVFILWGRNAISKEALITNSIHKIIKSVHPSPLSATRGFFGSKPFSKTNDFLVSINKEPIDWQIPNI.

The active-site Proton acceptor is the Asp-65.

Belongs to the uracil-DNA glycosylase (UDG) superfamily. UNG family.

Its subcellular location is the cytoplasm. It catalyses the reaction Hydrolyzes single-stranded DNA or mismatched double-stranded DNA and polynucleotides, releasing free uracil.. Functionally, excises uracil residues from the DNA which can arise as a result of misincorporation of dUMP residues by DNA polymerase or due to deamination of cytosine. In Clostridium perfringens (strain ATCC 13124 / DSM 756 / JCM 1290 / NCIMB 6125 / NCTC 8237 / Type A), this protein is Uracil-DNA glycosylase.